We begin with the raw amino-acid sequence, 179 residues long: Ribosome maturation factor RimP (179 aa).

The protein belongs to the RimP family.

The protein localises to the cytoplasm. Its function is as follows. Required for maturation of 30S ribosomal subunits. In Chlorobium chlorochromatii (strain CaD3), this protein is Ribosome maturation factor RimP.